Consider the following 205-residue polypeptide: Adenylyl-sulfate kinase (205 aa).

31–38 (GLSGAGKS) is a binding site for ATP. The active-site Phosphoserine intermediate is serine 105.

Belongs to the APS kinase family.

The enzyme catalyses adenosine 5'-phosphosulfate + ATP = 3'-phosphoadenylyl sulfate + ADP + H(+). It participates in sulfur metabolism; hydrogen sulfide biosynthesis; sulfite from sulfate: step 2/3. Functionally, catalyzes the synthesis of activated sulfate. The protein is Adenylyl-sulfate kinase of Shewanella sp. (strain MR-4).